The primary structure comprises 448 residues: MAHIAFDRSKLTPFIHDNELGEMQAMVNAADAQLRQGTGAGSDFRDWLTLPKDYDKAEFARIKAAAKKIRSDSEVFIVIGIGGSYLGAKMAVDFLHDTFFNTLPAEKRQGPQVFFAGNSISPDYLHDLINLIGDRDFSVNVISKSGTTTEPSIAFRIFKDMLIKKYGEEGAKSRIYATTDKQRGALKTEADAAGYETFVIPDGVGGRYSVLTAVGLLPIAASGADIDQLMQGAADAQETYTDPDLTKNEAYQYAATRNILYRKGYTTELLENYEPRLQYFAEWWKQLTGESEGKDQKGIYPSSANFSTDLHSLGQYIQEGLRNLMETVVVVDKPQNDVTVPSAEDDLDGLKYLEGKPMSFVNQKAYEGVVLAHTDGGVPNMSVHIPDQTPYTLGYLIYFFEVAVAVSGYLNGINPFNQPGVEAYKTNMFALLGKPGFEDLGKELNARL.

The active-site Proton donor is Glu-290. Residues His-311 and Lys-425 contribute to the active site.

This sequence belongs to the GPI family.

It is found in the cytoplasm. The catalysed reaction is alpha-D-glucose 6-phosphate = beta-D-fructose 6-phosphate. The protein operates within carbohydrate biosynthesis; gluconeogenesis. Its pathway is carbohydrate degradation; glycolysis; D-glyceraldehyde 3-phosphate and glycerone phosphate from D-glucose: step 2/4. Its function is as follows. Catalyzes the reversible isomerization of glucose-6-phosphate to fructose-6-phosphate. This is Glucose-6-phosphate isomerase from Levilactobacillus brevis (strain ATCC 367 / BCRC 12310 / CIP 105137 / JCM 1170 / LMG 11437 / NCIMB 947 / NCTC 947) (Lactobacillus brevis).